Here is a 478-residue protein sequence, read N- to C-terminus: Hexokinase (478 aa).

One can recognise a Hexokinase domain in the interval 21 to 465 (EYLLKELTEL…LGAGAAIIAA (445 aa)). Residues 75–208 (TGKEMGDYLA…KVPIEVVALI (134 aa)) are hexokinase small subdomain. Lysine 111 contacts ATP. Positions 151-177 (PLGFTFSYPASQGSINEGYLQRWTKGF) are glucose-binding. The interval 209-454 (NDTTGTLVAS…DPIVIVPAED (246 aa)) is hexokinase large subdomain.

Belongs to the hexokinase family. Monomer.

The catalysed reaction is a D-hexose + ATP = a D-hexose 6-phosphate + ADP + H(+). The enzyme catalyses D-fructose + ATP = D-fructose 6-phosphate + ADP + H(+). It carries out the reaction D-glucose + ATP = D-glucose 6-phosphate + ADP + H(+). It participates in carbohydrate metabolism; hexose metabolism. Its pathway is carbohydrate degradation; glycolysis; D-glyceraldehyde 3-phosphate and glycerone phosphate from D-glucose: step 1/4. Its function is as follows. Catalyzes the phosphorylation of hexose, such as D-glucose and D-fructose, to hexose 6-phosphate (D-glucose 6-phosphate and D-fructose 6-phosphate, respectively). Mediates the initial step of glycolysis by catalyzing phosphorylation of D-glucose to D-glucose 6-phosphate. The polypeptide is Hexokinase (HXK) (Schwanniomyces occidentalis (Yeast)).